Reading from the N-terminus, the 952-residue chain is Inner tegument protein (952 aa).

The tract at residues 490–952 (WQLKPHTILQ…PPPTDPALTN (463 aa)) is interaction with large tegument protein.

Belongs to the herpesviridae inner tegument protein family. In terms of assembly, interacts (via C-terminus) with the large tegument protein/LTP (via N-terminus).

Its subcellular location is the virion tegument. It is found in the host cytoplasm. It localises to the host nucleus. The protein localises to the host Golgi apparatus. The protein resides in the host trans-Golgi network. Plays an essential role in cytoplasmic secondary envelopment during viral egress. Interacts with the capsid via the large tegument protein/LTP and participates in its transport to the host trans-Golgi network (TGN) where secondary envelopment occurs. Modulates tegumentation and capsid accumulation at the viral assembly complex. This Connochaetes taurinus (Blue wildebeest) protein is Inner tegument protein (63).